Consider the following 238-residue polypeptide: Complement C1q-like protein 4 (238 aa).

The signal sequence occupies residues 1 to 15 (MVLLLLVAIPLLVHS). The segment at 36–101 (GPRGPGPDGA…PPGPGPGGVA (66 aa)) is disordered. In terms of domain architecture, Collagen-like spans 53 to 96 (PPGAKGEVGRRGKAGLRGPPGPPGPRGPPGEPGRPGPPGPPGPG). The span at 71–96 (PPGPPGPRGPPGEPGRPGPPGPPGPG) shows a compositional bias: pro residues. A C1q domain is found at 105–238 (GYVPRIAFYA…TFSGFIIYPD (134 aa)).

Forms homooligomers, predominantly dimers or trimers. Forms heterooligomers with C1QL1, C1QL2 and C1QL3, when proteins are coexpressed; this interaction does not occur after secretion. Interacts with ADGRB3. As to expression, highest expression levels in testis and adipose tissue, lower levels in skeletal muscle and kidney.

The protein localises to the secreted. In terms of biological role, may regulate the number of excitatory synapses that are formed on hippocampus neurons. Has no effect on inhibitory synapses. May inhibit adipocyte differentiation at an early stage of the process. The protein is Complement C1q-like protein 4 (C1QL4) of Homo sapiens (Human).